The chain runs to 293 residues: Calcium uniporter protein 2, mitochondrial (293 aa).

A mitochondrion-targeting transit peptide spans 1 to 33 (MWSVMGLVRRTAMSSTVNKASPVRSLLGGFRCL). The chain crosses the membrane as a helical span at residues 168–188 (ILWGGLGYSVVQIGIFVRLTF). Positions 193 to 201 (WDVMEPITF) match the Selectivity filter motif. Glu197 serves as a coordination point for Ca(2+). The chain crosses the membrane as a helical span at residues 198 to 218 (PITFFTTATGIIVGYAYFLMT).

Belongs to the MCU (TC 1.A.77) family.

It localises to the mitochondrion inner membrane. The enzyme catalyses Ca(2+)(in) = Ca(2+)(out). In terms of biological role, mitochondrial inner membrane calcium uniporter that mediates calcium uptake into mitochondria. Constitutes a pore-forming and calcium-conducting subunit. Mitochondrial calcium homeostasis plays key roles in cellular physiology and regulates cell bioenergetics, cytoplasmic calcium signals and activation of cell death pathways. This is Calcium uniporter protein 2, mitochondrial from Arabidopsis thaliana (Mouse-ear cress).